The sequence spans 545 residues: Calcium-dependent protein kinase 6 (545 aa).

Gly-2 carries the N-myristoyl glycine lipid modification. Residues 34-43 show a composition bias toward low complexity; that stretch reads CSSTSTATSS. The interval 34–58 is disordered; sequence CSSTSTATSSGGRMPIRSHQQRLSS. The Protein kinase domain maps to 74 to 332; sequence YTVGRKLGQG…AHQVLCHPWV (259 aa). Residues 80 to 88 and Lys-103 each bind ATP; that span reads LGQGQFGTT. The Proton acceptor role is filled by Asp-198. An autoinhibitory domain region spans residues 338–368; sequence APDRPLAPAVLSRLKQFSAMNRLKKMALRVI. 4 consecutive EF-hand domains span residues 375–410, 411–446, 447–482, and 486–516; these read EELA…YGSN, LREA…LNKL, EREE…HNMA, and IDDI…GAID. Ca(2+) contacts are provided by Asp-388, Asp-390, Ser-392, Glu-399, Asp-424, Asp-426, Ser-428, Thr-430, Glu-435, Asp-460, Asp-462, Ser-464, Tyr-466, Glu-471, Asp-494, Asp-496, Asp-498, Arg-500, and Glu-505. A disordered region spans residues 526–545; the sequence is GRPTTATSDDPSPTISSSSR. Residues 528–545 are compositionally biased toward low complexity; the sequence is PTTATSDDPSPTISSSSR.

Belongs to the protein kinase superfamily. Ser/Thr protein kinase family. CDPK subfamily.

It is found in the membrane. The catalysed reaction is L-seryl-[protein] + ATP = O-phospho-L-seryl-[protein] + ADP + H(+). It carries out the reaction L-threonyl-[protein] + ATP = O-phospho-L-threonyl-[protein] + ADP + H(+). Activated by calcium. Autophosphorylation may play an important role in the regulation of the kinase activity. In terms of biological role, may play a role in signal transduction pathways that involve calcium as a second messenger. This chain is Calcium-dependent protein kinase 6, found in Oryza sativa subsp. japonica (Rice).